The primary structure comprises 786 residues: Toll-like receptor 1 (786 aa).

The signal sequence occupies residues 1–24 (MTSIFHFAIIFMLILQIRIQLSEE). Topologically, residues 25-580 (SEFLVDRSKN…HMSELSCNIT (556 aa)) are extracellular. An N-linked (GlcNAc...) asparagine glycan is attached at asparagine 51. LRR repeat units lie at residues 54-77 (QNYI…LIIS), 78-101 (HNRI…LDLS), 102-125 (HNKL…SFNA), 126-150 (FDAL…STTH), 151-175 (LEKS…GETY), 176-199 (GEKE…FPTN), 200-223 (KEFH…NIKC), 224-250 (VLED…SNLT), 251-278 (LNNI…YFSI), 279-308 (SNVK…HQVV), 309-337 (SDVF…SGTR), 338-361 (MVHM…NLLT), 362-388 (DTVF…KELS), 389-414 (KIAE…SYDE), 415-437 (KKGD…ILTD), 438-457 (TIFR…SNKI), 458-478 (KSIP…VAFN), 479-500 (SLTD…IDHN), and 501-524 (SVSH…AGDN). A disulfide bridge links cysteine 110 with cysteine 132. Residues asparagine 137 and asparagine 163 are each glycosylated (N-linked (GlcNAc...) asparagine). The cysteines at positions 223 and 230 are disulfide-linked. An interaction with bacterial lipopeptide region spans residues 313 to 316 (GFPQ). Residue asparagine 330 is glycosylated (N-linked (GlcNAc...) asparagine). Cysteine 343 and cysteine 368 are disulfide-bonded. Cysteine 419 and cysteine 442 form a disulfide bridge. The N-linked (GlcNAc...) asparagine glycan is linked to asparagine 429. The 55-residue stretch at 525-579 (PFQCTCELGEFVKNIDQVSSEVLEGWPDSYKCDYPESYRGTLLKDFHMSELSCNI) folds into the LRRCT domain. The N-linked (GlcNAc...) asparagine glycan is linked to asparagine 578. A helical membrane pass occupies residues 581 to 601 (LLIVTIVATMLVLAVTVTSLC). The Cytoplasmic segment spans residues 602 to 786 (SYLDLPWYLR…NIKLTEQAKK (185 aa)). The region spanning 635–776 (LQFHAFISYS…LFWANLRAAI (142 aa)) is the TIR domain.

The protein belongs to the Toll-like receptor family. In terms of assembly, interacts (via extracellular domain) with TLR2. TLR2 seems to exist in heterodimers with either TLR1 or TLR6 before stimulation by the ligand. The heterodimers form bigger oligomers in response to their corresponding ligands as well as further heterotypic associations with other receptors such as CD14 and/or CD36. The activation cluster TLR2:TLR1:CD14 forms in response to triacylated lipopeptides. Binds MYD88 (via TIR domain). Interacts with CNPY3. Interacts with neutrophil recruitment protein from Aedes aegypti saliva; the interaction probably promotes activation of canonical NF-kappa-B signaling in skin-resident macrophages and subsequent expression of neutrophil chemoattractants. As to expression, ubiquitous. Highly expressed in spleen, ovary, peripheral blood leukocytes, thymus and small intestine.

The protein localises to the cell membrane. It is found in the cytoplasmic vesicle. The protein resides in the phagosome membrane. It localises to the membrane raft. Its subcellular location is the golgi apparatus. In terms of biological role, participates in the innate immune response to microbial agents. Specifically recognizes diacylated and triacylated lipopeptides. Cooperates with TLR2 to mediate the innate immune response to bacterial lipoproteins or lipopeptides. Forms the activation cluster TLR2:TLR1:CD14 in response to triacylated lipopeptides, this cluster triggers signaling from the cell surface and subsequently is targeted to the Golgi in a lipid-raft dependent pathway. Acts via MYD88 and TRAF6, leading to NF-kappa-B activation, cytokine secretion and the inflammatory response. This is Toll-like receptor 1 (TLR1) from Homo sapiens (Human).